Reading from the N-terminus, the 77-residue chain is Probable small nuclear ribonucleoprotein G (77 aa).

Positions 4 to 76 (THPPELKKYM…VVIMEPKERI (73 aa)) constitute a Sm domain.

This sequence belongs to the snRNP Sm proteins family. Core component of the spliceosomal U1, U2, U4 and U5 small nuclear ribonucleoproteins (snRNPs), the building blocks of the spliceosome.

Its subcellular location is the cytoplasm. It is found in the cytosol. The protein resides in the nucleus. In terms of biological role, plays a role in pre-mRNA splicing as a core component of the spliceosomal U1, U2, U4 and U5 small nuclear ribonucleoproteins (snRNPs), the building blocks of the spliceosome. The polypeptide is Probable small nuclear ribonucleoprotein G (snr-7) (Caenorhabditis elegans).